Here is a 79-residue protein sequence, read N- to C-terminus: Cell division protein ZapB (79 aa).

Residues 4-78 adopt a coiled-coil conformation; it reads EVFEKLEAKV…LRALLGKMEE (75 aa).

The protein belongs to the ZapB family. Homodimer. The ends of the coiled-coil dimer bind to each other, forming polymers. Interacts with FtsZ.

The protein resides in the cytoplasm. Functionally, non-essential, abundant cell division factor that is required for proper Z-ring formation. It is recruited early to the divisome by direct interaction with FtsZ, stimulating Z-ring assembly and thereby promoting cell division earlier in the cell cycle. Its recruitment to the Z-ring requires functional FtsA or ZipA. The sequence is that of Cell division protein ZapB from Erwinia tasmaniensis (strain DSM 17950 / CFBP 7177 / CIP 109463 / NCPPB 4357 / Et1/99).